The primary structure comprises 144 residues: Transcriptional regulator SlyA (144 aa).

One can recognise an HTH marR-type domain in the interval 2-135; the sequence is ESPLGSDLAR…LSNMIAKLEK (134 aa). Residues 49–72 constitute a DNA-binding region (H-T-H motif); it reads QIQLAKAIGIEQPSLVRTLDQLEE.

The protein belongs to the SlyA family. In terms of assembly, homodimer.

Transcription regulator that can specifically activate or repress expression of target genes. This chain is Transcriptional regulator SlyA, found in Sodalis glossinidius (strain morsitans).